The following is a 269-amino-acid chain: Protein UL24 (269 aa).

Residues 191 to 244 (IEPRTQRARRRRGGAARGSASRPKRSHSGARDPPESAARQLPPADQTPTSTEGG) form a disordered region.

It belongs to the herpesviridae UL24 family.

The protein resides in the virion. Its subcellular location is the host cytoplasm. It is found in the host nucleus. It localises to the host nucleolus. The protein localises to the host Golgi apparatus. In terms of biological role, may participate in nuclear egress of viral particles. Plays a role in the dispersal of several host nucleolar proteins including NCL/nucleolin and NPM1. Since deletion of host NCL/nucleolin negatively impact on nuclear egress, UL24 supposedly acts on this process through its effect on host nucleoli. In Homo sapiens (Human), this protein is Protein UL24.